Reading from the N-terminus, the 174-residue chain is MALELAVDWRIDNILEAIILMLPAMIANATPVVAGGRRPVDMGVVLPDGRRLLGDGKTIEGLLAGFAAGSAAGVLAALASGNMLLAVHSPAIALGALAGDMAGSFVKRRLGIERGRPAPLLDQLDFYLGALAVSIALGYTWTPRVAVEAAAAVLLLHLAANITAYLLGLKKVPW.

5 helical membrane passes run 14 to 34, 59 to 79, 83 to 103, 118 to 138, and 149 to 169; these read ILEA…PVVA, IEGL…AALA, MLLA…DMAG, APLL…IALG, and AAAA…LLGL.

It belongs to the CDP-archaeol synthase family. It depends on Mg(2+) as a cofactor.

It localises to the cell membrane. It carries out the reaction 2,3-bis-O-(geranylgeranyl)-sn-glycerol 1-phosphate + CTP + H(+) = CDP-2,3-bis-O-(geranylgeranyl)-sn-glycerol + diphosphate. The protein operates within membrane lipid metabolism; glycerophospholipid metabolism. Its function is as follows. Catalyzes the formation of CDP-2,3-bis-(O-geranylgeranyl)-sn-glycerol (CDP-archaeol) from 2,3-bis-(O-geranylgeranyl)-sn-glycerol 1-phosphate (DGGGP) and CTP. This reaction is the third ether-bond-formation step in the biosynthesis of archaeal membrane lipids. The sequence is that of CDP-archaeol synthase from Aeropyrum pernix (strain ATCC 700893 / DSM 11879 / JCM 9820 / NBRC 100138 / K1).